Here is a 274-residue protein sequence, read N- to C-terminus: Putative septum site-determining protein MinD (274 aa).

22–29 (KGGVGKTT) is an ATP binding site.

This sequence belongs to the ParA family. MinD subfamily.

It is found in the plastid. The protein localises to the chloroplast. Functionally, ATPase required for the correct placement of the division site. This Nephroselmis olivacea (Green alga) protein is Putative septum site-determining protein MinD (minD-A).